A 404-amino-acid polypeptide reads, in one-letter code: MSSSIFGPLTGFLERVNSLNAPYQALSYDEQKAMTIWQRVKFYNWTFELCALGVLFLVYAFYKFGNSVNLKRGNQIFQSLHSFLANDLKFSRVGFNINDSKIFTVEHQNTWFSSFATGRSAIKSINLNLHLVARSNPFSMCLEYLLGFFFASLKSKQLEEFMEIVIRPNGILVTSESAHPNKNAHEILTKFRFVTSIVNKEFMNQARTENYFLSIAHTSENDKLPNNFVYMSDVNQLSGFMFHYSKPYEVLSQAGNLLKYISFTDLPVNPPRDDKEWESSIEPKAIIRCAVPQNENELKLLNQIISLVVEIYDGFTQDLVQQSPNLFITNDILKRTTNLRQQELNKIKKFMKETELELAKEKKLELEKAKRRQLKASGQQEKVDQKMKEKRERRLKNKQRTRFQ.

The residue at position 2 (serine 2) is an N-acetylserine. The N-linked (GlcNAc...) asparagine glycan is linked to asparagine 44. A helical transmembrane segment spans residues 49–68 (LCALGVLFLVYAFYKFGNSV). The N-linked (GlcNAc...) asparagine glycan is linked to asparagine 98. Positions 369–404 (AKRRQLKASGQQEKVDQKMKEKRERRLKNKQRTRFQ) are disordered. Over residues 381 to 392 (EKVDQKMKEKRE) the composition is skewed to basic and acidic residues. Basic residues predominate over residues 393–404 (RRLKNKQRTRFQ).

The protein belongs to the UPF0674 family.

The protein localises to the endoplasmic reticulum membrane. The polypeptide is UPF0674 endoplasmic reticulum membrane protein YNR021W (Saccharomyces cerevisiae (strain ATCC 204508 / S288c) (Baker's yeast)).